A 370-amino-acid chain; its full sequence is Phosphoserine aminotransferase (370 aa).

Residue arginine 42 participates in L-glutamate binding. Positions 108, 158, 182, and 205 each coordinate pyridoxal 5'-phosphate. Lysine 206 is modified (N6-(pyridoxal phosphate)lysine). Position 247 to 248 (247 to 248 (NT)) interacts with pyridoxal 5'-phosphate.

This sequence belongs to the class-V pyridoxal-phosphate-dependent aminotransferase family. SerC subfamily. In terms of assembly, homodimer. Pyridoxal 5'-phosphate serves as cofactor.

It localises to the cytoplasm. The catalysed reaction is O-phospho-L-serine + 2-oxoglutarate = 3-phosphooxypyruvate + L-glutamate. It carries out the reaction 4-(phosphooxy)-L-threonine + 2-oxoglutarate = (R)-3-hydroxy-2-oxo-4-phosphooxybutanoate + L-glutamate. It functions in the pathway amino-acid biosynthesis; L-serine biosynthesis; L-serine from 3-phospho-D-glycerate: step 2/3. The protein operates within cofactor biosynthesis; pyridoxine 5'-phosphate biosynthesis; pyridoxine 5'-phosphate from D-erythrose 4-phosphate: step 3/5. Catalyzes the reversible conversion of 3-phosphohydroxypyruvate to phosphoserine and of 3-hydroxy-2-oxo-4-phosphonooxybutanoate to phosphohydroxythreonine. This Albidiferax ferrireducens (strain ATCC BAA-621 / DSM 15236 / T118) (Rhodoferax ferrireducens) protein is Phosphoserine aminotransferase.